The sequence spans 71 residues: Translational regulator CsrA (71 aa).

This sequence belongs to the CsrA/RsmA family. In terms of assembly, homodimer; the beta-strands of each monomer intercalate to form a hydrophobic core, while the alpha-helices form wings that extend away from the core.

It is found in the cytoplasm. In terms of biological role, a key translational regulator that binds mRNA to regulate translation initiation and/or mRNA stability. Mediates global changes in gene expression, shifting from rapid growth to stress survival by linking envelope stress, the stringent response and the catabolite repression systems. Usually binds in the 5'-UTR; binding at or near the Shine-Dalgarno sequence prevents ribosome-binding, repressing translation, binding elsewhere in the 5'-UTR can activate translation and/or stabilize the mRNA. Its function is antagonized by small RNA(s). The protein is Translational regulator CsrA of Pseudoalteromonas atlantica (strain T6c / ATCC BAA-1087).